Consider the following 742-residue polypeptide: G2/M phase-specific E3 ubiquitin-protein ligase (742 aa).

Residues 10–50 (SPPCVLCGWTDNCPEKYGEKRTYVEYNLTLHNYCLLMSSGI) form a C2HC pre-PHD-type zinc finger. The segment at 78–127 (LMCNICRKKGASIGCVAPKCKRSYHFPCGLQKECVFQFMEDFRSYCWEHK) adopts a PHD-type 1 zinc-finger fold. Residues 142-192 (QCTICLDLVEHLPLYSVLRSPCCKNTWFHRECLQYQALSAGIFFFRCAVCN) form a PHD-type 2; degenerate zinc finger. Residues 236-285 (RCLCKNGRDYNKPDSKWEIKRCQSCGSRGTHLACSSIKSWEQNWECVECR) form a PHD-type 3 zinc finger. An HECT domain is found at 417 to 742 (KGFRQRNFRP…IRSTLRGERE (326 aa)).

It localises to the nucleus. It is found in the nucleolus. The protein resides in the cytoplasm. The catalysed reaction is S-ubiquitinyl-[E2 ubiquitin-conjugating enzyme]-L-cysteine + [acceptor protein]-L-lysine = [E2 ubiquitin-conjugating enzyme]-L-cysteine + N(6)-ubiquitinyl-[acceptor protein]-L-lysine.. Its pathway is protein modification; protein ubiquitination. In terms of biological role, E3 ubiquitin-protein ligase which accepts ubiquitin from an E2 ubiquitin-conjugating enzyme in the form of a thioester and then directly transfers the ubiquitin to targeted substrates. Essential in early embryonic development to prevent apoptotic death. The protein is G2/M phase-specific E3 ubiquitin-protein ligase (G2E3) of Gallus gallus (Chicken).